Consider the following 246-residue polypeptide: 3-deoxy-manno-octulosonate cytidylyltransferase (246 aa).

Belongs to the KdsB family.

It is found in the cytoplasm. It carries out the reaction 3-deoxy-alpha-D-manno-oct-2-ulosonate + CTP = CMP-3-deoxy-beta-D-manno-octulosonate + diphosphate. Its pathway is nucleotide-sugar biosynthesis; CMP-3-deoxy-D-manno-octulosonate biosynthesis; CMP-3-deoxy-D-manno-octulosonate from 3-deoxy-D-manno-octulosonate and CTP: step 1/1. It functions in the pathway bacterial outer membrane biogenesis; lipopolysaccharide biosynthesis. Activates KDO (a required 8-carbon sugar) for incorporation into bacterial lipopolysaccharide in Gram-negative bacteria. This chain is 3-deoxy-manno-octulosonate cytidylyltransferase, found in Bradyrhizobium sp. (strain ORS 278).